Consider the following 258-residue polypeptide: L-aspartate dehydrogenase 1 (258 aa).

Residues alanine 121 and asparagine 181 each coordinate NAD(+). Histidine 211 is an active-site residue.

This sequence belongs to the L-aspartate dehydrogenase family.

The enzyme catalyses L-aspartate + NADP(+) + H2O = oxaloacetate + NH4(+) + NADPH + H(+). It catalyses the reaction L-aspartate + NAD(+) + H2O = oxaloacetate + NH4(+) + NADH + H(+). Its pathway is cofactor biosynthesis; NAD(+) biosynthesis; iminoaspartate from L-aspartate (dehydrogenase route): step 1/1. Its function is as follows. Specifically catalyzes the NAD or NADP-dependent dehydrogenation of L-aspartate to iminoaspartate. This chain is L-aspartate dehydrogenase 1, found in Bordetella bronchiseptica (strain ATCC BAA-588 / NCTC 13252 / RB50) (Alcaligenes bronchisepticus).